Reading from the N-terminus, the 273-residue chain is Dermonecrotic toxin LhSicTox-alphaIA2bi (273 aa).

The Mg(2+) site is built by glutamate 25 and aspartate 27. Histidine 41 functions as the Nucleophile in the catalytic mechanism. 2 disulfides stabilise this stretch: cysteine 45-cysteine 51 and cysteine 47-cysteine 190. Aspartate 85 contributes to the Mg(2+) binding site.

Belongs to the arthropod phospholipase D family. Class II subfamily. Mg(2+) serves as cofactor. As to expression, expressed by the venom gland.

The protein resides in the secreted. The enzyme catalyses an N-(acyl)-sphingosylphosphocholine = an N-(acyl)-sphingosyl-1,3-cyclic phosphate + choline. It catalyses the reaction an N-(acyl)-sphingosylphosphoethanolamine = an N-(acyl)-sphingosyl-1,3-cyclic phosphate + ethanolamine. It carries out the reaction a 1-acyl-sn-glycero-3-phosphocholine = a 1-acyl-sn-glycero-2,3-cyclic phosphate + choline. The catalysed reaction is a 1-acyl-sn-glycero-3-phosphoethanolamine = a 1-acyl-sn-glycero-2,3-cyclic phosphate + ethanolamine. In terms of biological role, dermonecrotic toxins cleave the phosphodiester linkage between the phosphate and headgroup of certain phospholipids (sphingolipid and lysolipid substrates), forming an alcohol (often choline) and a cyclic phosphate. This toxin acts on sphingomyelin (SM). It may also act on ceramide phosphoethanolamine (CPE), lysophosphatidylcholine (LPC) and lysophosphatidylethanolamine (LPE), but not on lysophosphatidylserine (LPS), and lysophosphatidylglycerol (LPG). It acts by transphosphatidylation, releasing exclusively cyclic phosphate products as second products. Induces dermonecrosis, hemolysis, increased vascular permeability, edema, inflammatory response, and platelet aggregation. This Loxosceles hirsuta (Recluse spider) protein is Dermonecrotic toxin LhSicTox-alphaIA2bi.